A 375-amino-acid polypeptide reads, in one-letter code: Queuine tRNA-ribosyltransferase (375 aa).

Asp-89 serves as the catalytic Proton acceptor. Substrate is bound by residues 89–93 (DSGGF), Asp-143, Gln-187, and Gly-214. The interval 245 to 251 (GVGKPED) is RNA binding. Asp-264 functions as the Nucleophile in the catalytic mechanism. Residues 269–273 (TRNAR) form an RNA binding; important for wobble base 34 recognition region. Positions 302, 304, 307, and 333 each coordinate Zn(2+).

This sequence belongs to the queuine tRNA-ribosyltransferase family. As to quaternary structure, homodimer. Within each dimer, one monomer is responsible for RNA recognition and catalysis, while the other monomer binds to the replacement base PreQ1. Requires Zn(2+) as cofactor.

It carries out the reaction 7-aminomethyl-7-carbaguanine + guanosine(34) in tRNA = 7-aminomethyl-7-carbaguanosine(34) in tRNA + guanine. It functions in the pathway tRNA modification; tRNA-queuosine biosynthesis. In terms of biological role, catalyzes the base-exchange of a guanine (G) residue with the queuine precursor 7-aminomethyl-7-deazaguanine (PreQ1) at position 34 (anticodon wobble position) in tRNAs with GU(N) anticodons (tRNA-Asp, -Asn, -His and -Tyr). Catalysis occurs through a double-displacement mechanism. The nucleophile active site attacks the C1' of nucleotide 34 to detach the guanine base from the RNA, forming a covalent enzyme-RNA intermediate. The proton acceptor active site deprotonates the incoming PreQ1, allowing a nucleophilic attack on the C1' of the ribose to form the product. After dissociation, two additional enzymatic reactions on the tRNA convert PreQ1 to queuine (Q), resulting in the hypermodified nucleoside queuosine (7-(((4,5-cis-dihydroxy-2-cyclopenten-1-yl)amino)methyl)-7-deazaguanosine). In Salmonella typhi, this protein is Queuine tRNA-ribosyltransferase.